The chain runs to 681 residues: Conserved oligomeric Golgi complex subunit 2 (681 aa).

This sequence belongs to the COG2 family. Component of the conserved oligomeric Golgi complex which is composed of eight different subunits and is required for normal Golgi morphology and localization.

It localises to the golgi apparatus membrane. Required for normal Golgi morphology and function. The chain is Conserved oligomeric Golgi complex subunit 2 (cogc-2) from Caenorhabditis elegans.